Reading from the N-terminus, the 139-residue chain is Actin-depolymerizing factor 1 (139 aa).

The 135-residue stretch at 5 to 139 (ASGMAVCDEC…SMDIVKSRAL (135 aa)) folds into the ADF-H domain.

It belongs to the actin-binding proteins ADF family.

Its function is as follows. Actin-depolymerizing protein. Severs actin filaments (F-actin) and binds to actin monomers. This Oryza sativa subsp. japonica (Rice) protein is Actin-depolymerizing factor 1 (ADF1).